Consider the following 184-residue polypeptide: Ribosome-recycling factor (184 aa).

Belongs to the RRF family.

Its subcellular location is the cytoplasm. Functionally, responsible for the release of ribosomes from messenger RNA at the termination of protein biosynthesis. May increase the efficiency of translation by recycling ribosomes from one round of translation to another. This is Ribosome-recycling factor from Borrelia turicatae (strain 91E135).